We begin with the raw amino-acid sequence, 213 residues long: Protein-L-isoaspartate O-methyltransferase (213 aa).

S61 is a catalytic residue.

This sequence belongs to the methyltransferase superfamily. L-isoaspartyl/D-aspartyl protein methyltransferase family.

The protein resides in the cytoplasm. The enzyme catalyses [protein]-L-isoaspartate + S-adenosyl-L-methionine = [protein]-L-isoaspartate alpha-methyl ester + S-adenosyl-L-homocysteine. In terms of biological role, catalyzes the methyl esterification of L-isoaspartyl residues in peptides and proteins that result from spontaneous decomposition of normal L-aspartyl and L-asparaginyl residues. It plays a role in the repair and/or degradation of damaged proteins. The polypeptide is Protein-L-isoaspartate O-methyltransferase (Maricaulis maris (strain MCS10) (Caulobacter maris)).